Here is a 1012-residue protein sequence, read N- to C-terminus: DNA polymerase catalytic subunit (1012 aa).

This sequence belongs to the DNA polymerase type-B family.

The protein resides in the host nucleus. The catalysed reaction is DNA(n) + a 2'-deoxyribonucleoside 5'-triphosphate = DNA(n+1) + diphosphate. The sequence is that of DNA polymerase catalytic subunit (U38) from Homo sapiens (Human).